Reading from the N-terminus, the 365-residue chain is UDP-N-acetylglucosamine--N-acetylmuramyl-(pentapeptide) pyrophosphoryl-undecaprenol N-acetylglucosamine transferase (365 aa).

UDP-N-acetyl-alpha-D-glucosamine-binding positions include Thr-17 to Gly-19, Asn-129, Arg-167, Ser-194, Ile-250, Ala-269 to Glu-274, and Gln-295.

Belongs to the glycosyltransferase 28 family. MurG subfamily.

It localises to the cell inner membrane. It carries out the reaction di-trans,octa-cis-undecaprenyl diphospho-N-acetyl-alpha-D-muramoyl-L-alanyl-D-glutamyl-meso-2,6-diaminopimeloyl-D-alanyl-D-alanine + UDP-N-acetyl-alpha-D-glucosamine = di-trans,octa-cis-undecaprenyl diphospho-[N-acetyl-alpha-D-glucosaminyl-(1-&gt;4)]-N-acetyl-alpha-D-muramoyl-L-alanyl-D-glutamyl-meso-2,6-diaminopimeloyl-D-alanyl-D-alanine + UDP + H(+). The protein operates within cell wall biogenesis; peptidoglycan biosynthesis. In terms of biological role, cell wall formation. Catalyzes the transfer of a GlcNAc subunit on undecaprenyl-pyrophosphoryl-MurNAc-pentapeptide (lipid intermediate I) to form undecaprenyl-pyrophosphoryl-MurNAc-(pentapeptide)GlcNAc (lipid intermediate II). This chain is UDP-N-acetylglucosamine--N-acetylmuramyl-(pentapeptide) pyrophosphoryl-undecaprenol N-acetylglucosamine transferase, found in Shewanella sediminis (strain HAW-EB3).